A 489-amino-acid polypeptide reads, in one-letter code: Anthranilate synthase component 1 1 (489 aa).

262–264 contributes to the L-tryptophan binding site; it reads PYS. Positions 288–309 are disordered; it reads DRIETEPIAGTRPRGETPDADD. 297–298 contacts chorismate; that stretch reads GT. The segment covering 300–309 has biased composition (basic and acidic residues); it reads PRGETPDADD. Glutamate 324 serves as a coordination point for Mg(2+). Residues tyrosine 412, arginine 432, 446–448, and glycine 448 contribute to the chorismate site; that span reads GAG. Residue glutamate 461 participates in Mg(2+) binding.

It belongs to the anthranilate synthase component I family. In terms of assembly, tetramer of two components I and two components II. Mg(2+) serves as cofactor.

It catalyses the reaction chorismate + L-glutamine = anthranilate + pyruvate + L-glutamate + H(+). The protein operates within amino-acid biosynthesis; L-tryptophan biosynthesis; L-tryptophan from chorismate: step 1/5. The protein is Anthranilate synthase component 1 1 (trpE1) of Haloarcula marismortui (strain ATCC 43049 / DSM 3752 / JCM 8966 / VKM B-1809) (Halobacterium marismortui).